The sequence spans 393 residues: Bifunctional enzyme IspD/IspF (393 aa).

The tract at residues 1 to 234 (MTISQRTAAI…ARLAAQLGDI (234 aa)) is 2-C-methyl-D-erythritol 4-phosphate cytidylyltransferase. The interval 235–393 (RTGTGYDVHA…SATIRLPWSA (159 aa)) is 2-C-methyl-D-erythritol 2,4-cyclodiphosphate synthase. Residues aspartate 241 and histidine 243 each coordinate a divalent metal cation. 4-CDP-2-C-methyl-D-erythritol 2-phosphate contacts are provided by residues 241 to 243 (DVH) and 267 to 268 (HS). Histidine 275 is a binding site for a divalent metal cation. 4-CDP-2-C-methyl-D-erythritol 2-phosphate is bound by residues 289 to 291 (DIG), 365 to 368 (TTSE), phenylalanine 372, and arginine 375.

The protein in the N-terminal section; belongs to the IspD/TarI cytidylyltransferase family. IspD subfamily. In the C-terminal section; belongs to the IspF family. The cofactor is a divalent metal cation.

The enzyme catalyses 2-C-methyl-D-erythritol 4-phosphate + CTP + H(+) = 4-CDP-2-C-methyl-D-erythritol + diphosphate. The catalysed reaction is 4-CDP-2-C-methyl-D-erythritol 2-phosphate = 2-C-methyl-D-erythritol 2,4-cyclic diphosphate + CMP. Its pathway is isoprenoid biosynthesis; isopentenyl diphosphate biosynthesis via DXP pathway; isopentenyl diphosphate from 1-deoxy-D-xylulose 5-phosphate: step 2/6. It functions in the pathway isoprenoid biosynthesis; isopentenyl diphosphate biosynthesis via DXP pathway; isopentenyl diphosphate from 1-deoxy-D-xylulose 5-phosphate: step 4/6. Its function is as follows. Bifunctional enzyme that catalyzes the formation of 4-diphosphocytidyl-2-C-methyl-D-erythritol from CTP and 2-C-methyl-D-erythritol 4-phosphate (MEP) (IspD), and catalyzes the conversion of 4-diphosphocytidyl-2-C-methyl-D-erythritol 2-phosphate (CDP-ME2P) to 2-C-methyl-D-erythritol 2,4-cyclodiphosphate (ME-CPP) with a corresponding release of cytidine 5-monophosphate (CMP) (IspF). This chain is Bifunctional enzyme IspD/IspF, found in Bradyrhizobium sp. (strain BTAi1 / ATCC BAA-1182).